Here is a 349-residue protein sequence, read N- to C-terminus: GDSL esterase/lipase At1g58525 (349 aa).

Residues 1-19 form the signal peptide; sequence MKLQILLLALVLIAVEANA. N-linked (GlcNAc...) asparagine glycosylation is present at Asn25. Catalysis depends on Ser37, which acts as the Nucleophile. N-linked (GlcNAc...) asparagine glycosylation occurs at Asn316. Residues Asp324 and His327 contribute to the active site.

This sequence belongs to the 'GDSL' lipolytic enzyme family.

The protein localises to the secreted. The polypeptide is GDSL esterase/lipase At1g58525 (Arabidopsis thaliana (Mouse-ear cress)).